The chain runs to 137 residues: Large-conductance mechanosensitive channel (137 aa).

Transmembrane regions (helical) follow at residues 10–30 and 76–96; these read FAMR…AAFG and GVFI…FVAI.

This sequence belongs to the MscL family. As to quaternary structure, homopentamer.

It is found in the cell inner membrane. Its function is as follows. Channel that opens in response to stretch forces in the membrane lipid bilayer. May participate in the regulation of osmotic pressure changes within the cell. The protein is Large-conductance mechanosensitive channel of Salmonella choleraesuis (strain SC-B67).